A 274-amino-acid chain; its full sequence is Eukaryotic translation initiation factor 3 subunit G-2 (274 aa).

Positions 194–272 constitute an RRM domain; it reads SAVRISNLSE…LILCVEWSKP (79 aa).

This sequence belongs to the eIF-3 subunit G family. As to quaternary structure, component of the eukaryotic translation initiation factor 3 (eIF-3) complex. The eIF-3 complex interacts with pix.

It is found in the cytoplasm. Functionally, RNA-binding component of the eukaryotic translation initiation factor 3 (eIF-3) complex, which is involved in protein synthesis of a specialized repertoire of mRNAs and, together with other initiation factors, stimulates binding of mRNA and methionyl-tRNAi to the 40S ribosome. The eIF-3 complex specifically targets and initiates translation of a subset of mRNAs involved in cell proliferation. This subunit can bind 18S rRNA. This Drosophila pseudoobscura pseudoobscura (Fruit fly) protein is Eukaryotic translation initiation factor 3 subunit G-2.